Here is a 648-residue protein sequence, read N- to C-terminus: Magnetosome protein MamZ (648 aa).

Residues 1–431 (MLEAWMPKSG…YAAWLLANGI (431 aa)) are major facilitator domain. 18 helical membrane passes run 28–49 (IIYL…IQPL), 69–87 (IQVV…FGLL), 94–113 (VRII…MSLL), 119–143 (LAFG…ADTV), 163–182 (LMGN…SAII), 188–207 (YKGG…IAGF), 252–273 (FYTR…ISVS), 285–305 (AHAA…IPLW), 317–335 (AIGA…LGMF), 341–361 (WLVA…FVTL), 373–395 (ILGA…LVQS), 407–428 (APFI…WLLA), 449–468 (PLVF…RSVI), 488–506 (YLGD…MRPV), 518–538 (YRRM…LAYV), 558–574 (FILL…PLAF), 595–612 (ATYV…LAAN), and 618–634 (PYVY…YRFY). The interval 444-645 (KVDWKPLVFL…WRGGNVLRAL (202 aa)) is ferric reductase-like domain, required for correct magnetite crystal formation.

The protein in the N-terminal section; belongs to the major facilitator superfamily. Probably interacts with FtsZ-like and MamY proteins.

It localises to the magnetosome membrane. In terms of biological role, required for correct biomineralization of the magnetosome; probably converts and then transports some form of iron. It is partially functionally redundant with MamH. May function with MamX, MamY amd Mms6 in biomineralization. Despite its strong similarity to MsrQ (AC V6EX82) this protein does not genetically interact with bona fide MsrP (AC V6F0A4), which is encoded elsewhere in the genome. The chain is Magnetosome protein MamZ from Magnetospirillum gryphiswaldense (strain DSM 6361 / JCM 21280 / NBRC 15271 / MSR-1).